A 480-amino-acid polypeptide reads, in one-letter code: Siroheme synthase 1 (480 aa).

Residues 1–203 (MNYLPIFADL…GQLEQAEGEL (203 aa)) form a precorrin-2 dehydrogenase /sirohydrochlorin ferrochelatase region. NAD(+) contacts are provided by residues 22 to 23 (EV) and 43 to 44 (LA). At S128 the chain carries Phosphoserine. A uroporphyrinogen-III C-methyltransferase region spans residues 222-480 (GEVALVGAGP…DSRPAVVNLA (259 aa)). P231 is an S-adenosyl-L-methionine binding site. The Proton acceptor role is filled by D254. Residue K276 is the Proton donor of the active site. S-adenosyl-L-methionine-binding positions include 307 to 309 (GGD), I312, 337 to 338 (TA), M389, and G418.

The protein in the N-terminal section; belongs to the precorrin-2 dehydrogenase / sirohydrochlorin ferrochelatase family. This sequence in the C-terminal section; belongs to the precorrin methyltransferase family.

It carries out the reaction uroporphyrinogen III + 2 S-adenosyl-L-methionine = precorrin-2 + 2 S-adenosyl-L-homocysteine + H(+). The enzyme catalyses precorrin-2 + NAD(+) = sirohydrochlorin + NADH + 2 H(+). It catalyses the reaction siroheme + 2 H(+) = sirohydrochlorin + Fe(2+). It functions in the pathway cofactor biosynthesis; adenosylcobalamin biosynthesis; precorrin-2 from uroporphyrinogen III: step 1/1. The protein operates within cofactor biosynthesis; adenosylcobalamin biosynthesis; sirohydrochlorin from precorrin-2: step 1/1. Its pathway is porphyrin-containing compound metabolism; siroheme biosynthesis; precorrin-2 from uroporphyrinogen III: step 1/1. It participates in porphyrin-containing compound metabolism; siroheme biosynthesis; siroheme from sirohydrochlorin: step 1/1. It functions in the pathway porphyrin-containing compound metabolism; siroheme biosynthesis; sirohydrochlorin from precorrin-2: step 1/1. Functionally, multifunctional enzyme that catalyzes the SAM-dependent methylations of uroporphyrinogen III at position C-2 and C-7 to form precorrin-2 via precorrin-1. Then it catalyzes the NAD-dependent ring dehydrogenation of precorrin-2 to yield sirohydrochlorin. Finally, it catalyzes the ferrochelation of sirohydrochlorin to yield siroheme. The sequence is that of Siroheme synthase 1 from Pectobacterium atrosepticum (strain SCRI 1043 / ATCC BAA-672) (Erwinia carotovora subsp. atroseptica).